The primary structure comprises 687 residues: DnaJ protein ERDJ2A (687 aa).

Residues 1–8 (MAASEENS) are Lumenal-facing. The helical transmembrane segment at 9 to 29 (ALFPIFILTIMAIPLVPYTMV) threads the bilayer. At 30–65 (KLSGALSKKQRTIHCQCLECDRSGKYKRSLFKKISN) the chain is on the cytoplasmic side. A helical membrane pass occupies residues 66 to 86 (FSTWSNLTLVLLWVVMIFLIY). Residues 87-190 (YTKNMSREAQ…FLLDIDGASG (104 aa)) are Lumenal-facing. Asparagine 90 is a glycosylation site (N-linked (GlcNAc...) asparagine). The J domain occupies 99-164 (DPFSILGLEP…VSRENFEKYG (66 aa)). The chain crosses the membrane as a helical span at residues 191-211 (GILLLWIVGVCILLPLVIAVI). The region spanning 205 to 603 (PLVIAVIYLS…IGCDKKQALK (399 aa)) is the SEC63 domain. Residues 212–687 (YLSRSSKYTG…SSEESGSEEE (476 aa)) are Cytoplasmic-facing. A disordered region spans residues 619–687 (SDEGAIAEEG…SSEESGSEEE (69 aa)). Over residues 623–654 (AIAEEGMEEEDEIEEEDYDDDYESEYSEDEDE) the composition is skewed to acidic residues.

As to quaternary structure, interacts with OEP61/TPR7. In terms of tissue distribution, expressed in leaves, flower buds and flowers.

Its subcellular location is the endoplasmic reticulum membrane. Its function is as follows. Required for integral membrane and secreted preprotein translocation across the endoplasmic reticulum membrane. This chain is DnaJ protein ERDJ2A (ERDJ2A), found in Arabidopsis thaliana (Mouse-ear cress).